We begin with the raw amino-acid sequence, 84 residues long: MFMADAYLADTVWYVGQIIFIVAICLLVTIVVVAFLATFKLCIQLCGMCNTLVLSPSIYVFNRGRQFYEFYNDVKPPVLDVDDV.

The Virion surface portion of the chain corresponds to 1–18 (MFMADAYLADTVWYVGQI). A helical transmembrane segment spans residues 19–39 (IFIVAICLLVTIVVVAFLATF). Residues 40 to 80 (KLCIQLCGMCNTLVLSPSIYVFNRGRQFYEFYNDVKPPVLD) are Intravirion-facing.

It belongs to the betacoronaviruses E protein family. In terms of assembly, homopentamer. Interacts with membrane protein M in the budding compartment of the host cell, which is located between endoplasmic reticulum and the Golgi complex. Interacts with Nucleoprotein.

The protein resides in the host Golgi apparatus membrane. In terms of biological role, plays a central role in virus morphogenesis and assembly. Acts as a viroporin and self-assembles in host membranes forming pentameric protein-lipid pores that allow ion transport. Also plays a role in the induction of apoptosis. This chain is Envelope small membrane protein, found in Human coronavirus OC43 (HCoV-OC43).